The chain runs to 252 residues: Chitooligosaccharide deacetylase (252 aa).

Mg(2+) contacts are provided by histidine 61 and histidine 125.

It belongs to the YdjC deacetylase family. ChbG subfamily. Homodimer. Requires Mg(2+) as cofactor.

It localises to the cytoplasm. The enzyme catalyses N,N'-diacetylchitobiose + H2O = N-acetyl-beta-D-glucosaminyl-(1-&gt;4)-D-glucosamine + acetate. It carries out the reaction diacetylchitobiose-6'-phosphate + H2O = N'-monoacetylchitobiose-6'-phosphate + acetate. Its pathway is glycan degradation; chitin degradation. Its function is as follows. Involved in the degradation of chitin. ChbG is essential for growth on the acetylated chitooligosaccharides chitobiose and chitotriose but is dispensable for growth on cellobiose and chitosan dimer, the deacetylated form of chitobiose. Deacetylation of chitobiose-6-P and chitotriose-6-P is necessary for both the activation of the chb promoter by the regulatory protein ChbR and the hydrolysis of phosphorylated beta-glucosides by the phospho-beta-glucosidase ChbF. Catalyzes the removal of only one acetyl group from chitobiose-6-P to yield monoacetylchitobiose-6-P, the inducer of ChbR and the substrate of ChbF. The sequence is that of Chitooligosaccharide deacetylase from Salmonella heidelberg (strain SL476).